A 1464-amino-acid chain; its full sequence is Collagen alpha-1(I) chain (1464 aa).

The signal sequence occupies residues 1–22 (MFSFVDLRLLLLLAATALLTHG). Residues 23 to 161 (QEEGQVEGQD…PPGLGGNFAP (139 aa)) constitute a propeptide, N-terminal propeptide. Residues 38-96 (ITCVQNGLRYHDRDVWKPEPCRICVCDNGKVLCDDVICDETKNCPGAEVPEGECCPVCP) form the VWFC domain. Residues 98 to 1214 (GSESPTDQET…PQEKAHDGGR (1117 aa)) are disordered. The span at 138 to 153 (PGLPGPPGPPGPPGPP) shows a compositional bias: pro residues. Position 162 is a pyrrolidone carboxylic acid (Gln-162). The tract at residues 162-178 (QLSYGYDEKSTGGISVP) is nonhelical region (N-terminal). The residue at position 170 (Lys-170) is an Allysine. Residue Ser-171 is modified to Phosphoserine. Residues 179 to 1192 (GPMGPSGPRG…PGPPGPPGPP (1014 aa)) are triple-helical region. A 4-hydroxyproline mark is found at Pro-190, Pro-193, Pro-196, Pro-205, Pro-208, Pro-211, Pro-226, Pro-241, Pro-247, Pro-256, and Pro-262. Over residues 198–217 (PQGFQGPPGEPGEPGASGPM) the composition is skewed to low complexity. Over residues 229-243 (NGDDGEAGKPGRPGE) the composition is skewed to basic and acidic residues. The residue at position 265 (Lys-265) is a 5-hydroxylysine; alternate. O-linked (Gal...) hydroxylysine; alternate glycosylation occurs at Lys-265. A Phosphoserine modification is found at Ser-271. Residues 279-295 (DAGPAGPKGEPGSPGEN) show a composition bias toward low complexity. Pro-289, Pro-292, Pro-298, Pro-307, and Pro-313 each carry 4-hydroxyproline. A compositionally biased stretch (low complexity) spans 318–331 (PAGARGNDGATGAA). Residues 333–345 (PPGPTGPAGPPGF) are compositionally biased toward pro residues. A 4-hydroxyproline mark is found at Pro-334, Pro-343, Pro-346, Pro-373, Pro-376, Pro-388, Pro-394, Pro-403, Pro-409, Pro-412, and Pro-427. The segment covering 379–418 (AGAAGPAGNPGADGQPGAKGANGAPGIAGAPGFPGARGPS) has biased composition (low complexity). At Lys-430 the chain carries 5-hydroxylysine. Residues Pro-436, Pro-439, Pro-451, Pro-460, Pro-475, Pro-481, Pro-490, and Pro-496 each carry the 4-hydroxyproline modification. The span at 448–457 (KGEPGPVGVQ) shows a compositional bias: low complexity. Gly residues predominate over residues 485–494 (GERGGPGSRG). At Lys-505 the chain carries 5-hydroxylysine. A 4-hydroxyproline mark is found at Pro-514, Pro-523, Pro-529, Pro-535, Pro-544, Pro-547, Pro-556, Pro-565, Pro-571, Pro-583, Pro-592, Pro-601, Pro-604, Pro-622, Pro-640, Pro-646, Pro-652, Pro-658, Pro-664, Pro-670, Pro-682, Pro-691, Pro-703, Pro-715, Pro-718, Pro-724, Pro-730, and Pro-739. Positions 538–564 (KGLTGSPGSPGPDGKTGPPGPAGQDGR) are enriched in low complexity. Residues 573–592 (ARGQAGVMGFPGPKGAAGEP) show a composition bias toward low complexity. Residues 634–661 (QGPAGSPGFQGLPGPAGPPGEAGKPGEQ) show a composition bias toward low complexity. The span at 696 to 724 (PRGANGAPGNDGAKGDAGAPGAPGSQGAP) shows a compositional bias: low complexity. Positions 745–747 (RGD) match the Cell attachment site motif. At Lys-751 the chain carries 5-hydroxylysine. 4-hydroxyproline is present on residues Pro-757, Pro-772, and Pro-778. A compositionally biased stretch (low complexity) spans 784 to 798 (SGPSGPAGPTGARGA). Ser-787 bears the Phosphoserine mark. A 4-hydroxyproline mark is found at Pro-799, Pro-805, Pro-808, Pro-817, Pro-823, Pro-841, Pro-850, and Pro-859. Positions 811–838 (AGFAGPPGADGQPGAKGEPGDAGAKGDA) are enriched in low complexity. A compositionally biased stretch (pro residues) spans 840–852 (PPGPAGPAGPPGP). A compositionally biased stretch (low complexity) spans 853–883 (IGNVGAPGAKGARGSAGPPGATGFPGAAGRV). Position 862 is a 5-hydroxylysine (Lys-862). 4-hydroxyproline occurs at positions 871 and 877. Pro-885 carries the 3-hydroxyproline modification. Residues Pro-886, Pro-895, Pro-898, Pro-919, Pro-928, Pro-937, Pro-946, Pro-964, Pro-973, Pro-976, Pro-982, Pro-997, Pro-1003, Pro-1009, Pro-1018, and Pro-1024 each carry the 4-hydroxyproline modification. The span at 912-921 (ETGPAGRPGE) shows a compositional bias: low complexity. Residues 931–955 (AGEKGSPGADGPAGAPGTPGPQGIA) are compositionally biased toward low complexity. The segment covering 996–1006 (PPGPMGPPGLA) has biased composition (pro residues). A 5-hydroxylysine modification is found at Lys-1033. The span at 1042 to 1057 (AGPPGAPGAPGAPGPV) shows a compositional bias: pro residues. 4-hydroxyproline is present on residues Pro-1045, Pro-1048, and Pro-1051. Positions 1078–1092 (VGPVGARGPAGPQGP) are enriched in low complexity. The Cell attachment site signature appears at 1093 to 1095 (RGD). A compositionally biased stretch (basic and acidic residues) spans 1093 to 1107 (RGDKGETGEQGDRGI). A 5-hydroxylysine modification is found at Lys-1096. A 5-hydroxylysine; alternate modification is found at Lys-1108. Lys-1108 carries O-linked (Gal...) hydroxylysine; alternate glycosylation. 4-hydroxyproline occurs at positions 1120, 1123, 1126, 1144, and 1159. The span at 1126 to 1159 (PGEQGPSGASGPAGPRGPPGSAGAPGKDGLNGLP) shows a compositional bias: low complexity. Pro-1164 is subject to 3-hydroxyproline. At Pro-1165 the chain carries 4-hydroxyproline. A compositionally biased stretch (pro residues) spans 1177-1192 (VGPPGPPGPPGPPGPP). Position 1179 is a 3-hydroxyproline (Pro-1179). Pro-1180 is modified (4-hydroxyproline). Pro-1182 carries the post-translational modification 3-hydroxyproline. Pro-1183 bears the 4-hydroxyproline mark. Pro-1185 carries the post-translational modification 3-hydroxyproline. A 4-hydroxyproline mark is found at Pro-1186, Pro-1189, and Pro-1192. Residues 1193–1218 (SAGFDFSFLPQPPQEKAHDGGRYYRA) form a nonhelical region (C-terminal) region. Lys-1208 carries the allysine modification. Residues 1219-1464 (DDANVVRDRD…GFDVGPVCFL (246 aa)) constitute a propeptide, C-terminal propeptide. One can recognise a Fibrillar collagen NC1 domain in the interval 1229–1464 (LEVDTTLKSL…GFDVGPVCFL (236 aa)). 3 disulfides stabilise this stretch: Cys-1259–Cys-1291, Cys-1299–Cys-1462, and Cys-1370–Cys-1415. Residues Asp-1277, Asn-1279, Gln-1280, Cys-1282, and Asp-1285 each contribute to the Ca(2+) site. Asn-1365 carries an N-linked (GlcNAc...) asparagine glycan.

It belongs to the fibrillar collagen family. In terms of assembly, trimers of one alpha 2(I) and two alpha 1(I) chains. Interacts with MRC2. Interacts with TRAM2. Interacts with MFAP4 in a Ca (2+)-dependent manner. Post-translationally, contains mostly 4-hydroxyproline. Proline residues at the third position of the tripeptide repeating unit (G-X-Y) are hydroxylated in some or all of the chains. In terms of processing, contains 3-hydroxyproline at a few sites. This modification occurs on the first proline residue in the sequence motif Gly-Pro-Hyp, where Hyp is 4-hydroxyproline. Lysine residues at the third position of the tripeptide repeating unit (G-X-Y) are 5-hydroxylated in some or all of the chains. Post-translationally, O-glycosylated on hydroxylated lysine residues. The O-linked glycan consists of a Glc-Gal disaccharide. Forms the fibrils of tendon, ligaments and bones. In bones the fibrils are mineralized with calcium hydroxyapatite.

It is found in the secreted. The protein localises to the extracellular space. It localises to the extracellular matrix. In terms of biological role, type I collagen is a member of group I collagen (fibrillar forming collagen). The polypeptide is Collagen alpha-1(I) chain (COL1A1) (Homo sapiens (Human)).